A 218-amino-acid polypeptide reads, in one-letter code: Small ribosomal subunit protein uS3c (218 aa).

A KH type-2 domain is found at 47-118; that stretch reads VRKHIKSSSN…KLRMALTEVE (72 aa).

Belongs to the universal ribosomal protein uS3 family. In terms of assembly, part of the 30S ribosomal subunit.

The protein resides in the plastid. It is found in the chloroplast. The protein is Small ribosomal subunit protein uS3c (rps3) of Anthoceros angustus (Hornwort).